A 236-amino-acid polypeptide reads, in one-letter code: MNNSVKEKIKGGLVVSCQALSNEPLHSSFIMSKMALAAVQSGAVGIRANTTKDIKAIEEQVDVPIIGIFKNEYEGSEVFITPTYKEVKEICESGAQIVAMDATTRLRPHGEKLDEIIKTVRKEFPNILLMADTSSLEDVKYADALGFDFIGTTLYGYTEATTGKNISDNQFAYLKEVLKSTTTPIIAEGKIDTPEKAREVLALGCYSVVVGGAITRPQEITKRFINEMKKDHLGKS.

It belongs to the NanE family.

The enzyme catalyses an N-acyl-D-glucosamine 6-phosphate = an N-acyl-D-mannosamine 6-phosphate. The protein operates within amino-sugar metabolism; N-acetylneuraminate degradation; D-fructose 6-phosphate from N-acetylneuraminate: step 3/5. Its function is as follows. Converts N-acetylmannosamine-6-phosphate (ManNAc-6-P) to N-acetylglucosamine-6-phosphate (GlcNAc-6-P). In Listeria welshimeri serovar 6b (strain ATCC 35897 / DSM 20650 / CCUG 15529 / CIP 8149 / NCTC 11857 / SLCC 5334 / V8), this protein is Putative N-acetylmannosamine-6-phosphate 2-epimerase.